We begin with the raw amino-acid sequence, 171 residues long: Adenine phosphoribosyltransferase (171 aa).

This sequence belongs to the purine/pyrimidine phosphoribosyltransferase family. Homodimer.

The protein resides in the cytoplasm. The enzyme catalyses AMP + diphosphate = 5-phospho-alpha-D-ribose 1-diphosphate + adenine. It participates in purine metabolism; AMP biosynthesis via salvage pathway; AMP from adenine: step 1/1. Catalyzes a salvage reaction resulting in the formation of AMP, that is energically less costly than de novo synthesis. The polypeptide is Adenine phosphoribosyltransferase (Solidesulfovibrio magneticus (strain ATCC 700980 / DSM 13731 / RS-1) (Desulfovibrio magneticus)).